The sequence spans 194 residues: tRNA(Phe) 7-((3-amino-3-carboxypropyl)-4-demethylwyosine(37)-N(4))-methyltransferase 1 (194 aa).

It belongs to the TYW3 family.

The enzyme catalyses 4-demethyl-7-[(3S)-3-amino-3-carboxypropyl]wyosine(37) in tRNA(Phe) + S-adenosyl-L-methionine = 7-[(3S)-3-amino-3-carboxypropyl]wyosine(37) in tRNA(Phe) + S-adenosyl-L-homocysteine + H(+). Functionally, S-adenosyl-L-methionine-dependent methyltransferase that acts as a component of the wyosine derivatives biosynthesis pathway. Probably methylates N-4 position of wybutosine-86 to produce wybutosine-72. The protein is tRNA(Phe) 7-((3-amino-3-carboxypropyl)-4-demethylwyosine(37)-N(4))-methyltransferase 1 of Pyrococcus abyssi (strain GE5 / Orsay).